We begin with the raw amino-acid sequence, 282 residues long: MDSSSYWSYDNIVPSFRLDGKLVIITGGSGGLSAVVSRALLAKGADIALIDMNLERTQQAARDVLQWGEEQMKGKHESPIGQVSAWSCNIGDAEAVELTFKAINEHHGKVASVLINTAGYAENFPAEEYPAKNAENIMKVNGLGSFYVSQAFARPLIQNNMTGSIILIGSMSGTIVNDPQPQCMYNMSKAGVIHLARSLACEWAKYNIRVNTLSPGYILTPLTRNVISGHTEMKTEWESKIPMKRMAEPKEFVGSILYLASDSASSYTTGHNLVVDGGYECW.

The NADP(+) site is built by leucine 32 and asparagine 53. Serine 170 (proton donor) is an active-site residue. 4 residues coordinate NADP(+): tyrosine 185, lysine 189, isoleucine 218, and threonine 220. Tyrosine 185 serves as the catalytic Proton acceptor. Lysine 189 functions as the Lowers pKa of active site Tyr in the catalytic mechanism.

The protein belongs to the short-chain dehydrogenases/reductases (SDR) family.

The catalysed reaction is D-arabinitol + NAD(+) = D-ribulose + NADH + H(+). It participates in carbohydrate metabolism; D-arabinitol metabolism. Its function is as follows. Catalyzes the NAD(+)-dependent oxidation of D-arabinitol at carbon 4 to produce D-ribulose. This Candida tropicalis (Yeast) protein is D-arabinitol 2-dehydrogenase [ribulose-forming] (ARD).